The following is a 280-amino-acid chain: ATP synthase gamma chain (280 aa).

It belongs to the ATPase gamma chain family. F-type ATPases have 2 components, CF(1) - the catalytic core - and CF(0) - the membrane proton channel. CF(1) has five subunits: alpha(3), beta(3), gamma(1), delta(1), epsilon(1). CF(0) has three main subunits: a, b and c.

It is found in the cell membrane. Its function is as follows. Produces ATP from ADP in the presence of a proton gradient across the membrane. The gamma chain is believed to be important in regulating ATPase activity and the flow of protons through the CF(0) complex. The chain is ATP synthase gamma chain from Mycoplasma capricolum subsp. capricolum (strain California kid / ATCC 27343 / NCTC 10154).